The sequence spans 413 residues: Methylaspartate ammonia-lyase (413 aa).

Gln-172 contributes to the (2S,3S)-3-methyl-L-aspartate binding site. 3 residues coordinate Mg(2+): Asp-238, Glu-273, and Asp-307. Gln-329 contacts (2S,3S)-3-methyl-L-aspartate. Lys-331 serves as the catalytic Proton acceptor. 360–361 serves as a coordination point for (2S,3S)-3-methyl-L-aspartate; it reads TC.

Belongs to the methylaspartate ammonia-lyase family. In terms of assembly, homodimer. It depends on Mg(2+) as a cofactor.

It carries out the reaction (2S,3S)-3-methyl-L-aspartate = mesaconate + NH4(+). It functions in the pathway amino-acid degradation; L-glutamate degradation via mesaconate pathway; acetate and pyruvate from L-glutamate: step 2/4. Functionally, involved in the methylaspartate cycle. Catalyzes the formation of the alpha,beta-unsaturated bond by the reversible anti elimination of ammonia from L-threo-beta-methylaspartate (L-threo-(2S,3S)-3-methylaspartate) to give mesaconate. The chain is Methylaspartate ammonia-lyase from Citrobacter amalonaticus.